Here is a 513-residue protein sequence, read N- to C-terminus: Galactose-1-phosphate uridylyltransferase (513 aa).

The protein belongs to the galactose-1-phosphate uridylyltransferase type 2 family.

It is found in the cytoplasm. It carries out the reaction alpha-D-galactose 1-phosphate + UDP-alpha-D-glucose = alpha-D-glucose 1-phosphate + UDP-alpha-D-galactose. The protein operates within carbohydrate metabolism; galactose metabolism. In Bacillus subtilis (strain 168), this protein is Galactose-1-phosphate uridylyltransferase (galT).